We begin with the raw amino-acid sequence, 343 residues long: Squamosa promoter-binding-like protein 11 (343 aa).

Residues 1 to 48 form a disordered region; that stretch reads MECNPVSSTTSSSLLWDWDATASAEPPPPPGKRGGRDSSSASASAKRG. Composition is skewed to low complexity over residues 7–19 and 37–48; these read SSTTSSSLLWDWD and DSSSASASAKRG. Residues 64 to 141 form an SBP-type zinc finger; that stretch reads APRCQVEGCG…SDHNARRRKP (78 aa). Cys67, Cys72, Cys89, His92, Cys108, Cys111, His115, and Cys127 together coordinate Zn(2+). Residues 124–140 carry the Bipartite nuclear localization signal motif; the sequence is KRSCRRRLSDHNARRRK.

Expressed in stems, leaf sheaths, and young panicles.

The protein resides in the nucleus. Trans-acting factor that binds specifically to the consensus nucleotide sequence 5'-TNCGTACAA-3'. May be involved in panicle development. This chain is Squamosa promoter-binding-like protein 11 (SPL11), found in Oryza sativa subsp. japonica (Rice).